The sequence spans 273 residues: Nucleotide-binding protein TTHA0319 (273 aa).

8-15 is an ATP binding site; sequence GLSGAGKT. A GTP-binding site is contributed by 57-60; the sequence is DARA.

The protein belongs to the RapZ-like family.

Displays ATPase and GTPase activities. The sequence is that of Nucleotide-binding protein TTHA0319 from Thermus thermophilus (strain ATCC 27634 / DSM 579 / HB8).